We begin with the raw amino-acid sequence, 449 residues long: SWI/SNF chromatin-remodeling accessory subunit 2 (449 aa).

The segment covering 1 to 11 (MHSQQRPNPQM) has biased composition (polar residues). Residues 1-56 (MHSQQRPNPQMNRHPYGTPGSAPQMRRPGGFAGQPPQMHGPRMVAPPAAPLPKKKK) form a disordered region. The SWIB/MDM2 domain maps to 223–300 (NHPAKFKLHP…PNKLHQLLQQ (78 aa)).

It belongs to the SMARCD family. As to quaternary structure, component of the multiprotein chromatin-remodeling complexes SWI/SNF: SWI/SNF-A (BAF), SWI/SNF-B (PBAF) and related complexes. The canonical complex contains a catalytic subunit swsn-4, core subunits swsn-1 and swsn-5, and accessory subunits swsn-3, swsn-6, phf-10, dpff-1, swsn-9 and either ham-3/swsn-2.1 or swsn-2.2.

It is found in the nucleus. The protein localises to the nucleoplasm. It localises to the chromosome. The protein resides in the nucleus envelope. Its function is as follows. Involved in transcriptional activation and repression of select genes by chromatin remodeling (alteration of DNA-nucleosome topology). Component of SWI/SNF chromatin remodeling complexes that carry out key enzymatic activities, changing chromatin structure by altering DNA-histone contacts within a nucleosome in an ATP-dependent manner. Probably regulates vulva development through the let-60/Ras pathway. Involved in nuclear reassembly after mitosis and recruitment of nuclear envelope protein, mel-28, to the nuclear periphery in the early embryo and in the adult germline. Involved in gonadogenesis. The protein is SWI/SNF chromatin-remodeling accessory subunit 2 of Caenorhabditis elegans.